Consider the following 689-residue polypeptide: DNA ligase (689 aa).

NAD(+) contacts are provided by residues 40-44, 89-90, and Glu122; these read DQEYD and SL. The active-site N6-AMP-lysine intermediate is the Lys124. 4 residues coordinate NAD(+): Arg145, Glu182, Lys300, and Lys325. Residues Cys419, Cys422, Cys437, and Cys442 each coordinate Zn(2+). One can recognise a BRCT domain in the interval 600-689; the sequence is QADGVLTGAT…SADASADASA (90 aa).

Belongs to the NAD-dependent DNA ligase family. LigA subfamily. Requires Mg(2+) as cofactor. Mn(2+) is required as a cofactor.

It catalyses the reaction NAD(+) + (deoxyribonucleotide)n-3'-hydroxyl + 5'-phospho-(deoxyribonucleotide)m = (deoxyribonucleotide)n+m + AMP + beta-nicotinamide D-nucleotide.. DNA ligase that catalyzes the formation of phosphodiester linkages between 5'-phosphoryl and 3'-hydroxyl groups in double-stranded DNA using NAD as a coenzyme and as the energy source for the reaction. It is essential for DNA replication and repair of damaged DNA. This is DNA ligase from Gemmatimonas aurantiaca (strain DSM 14586 / JCM 11422 / NBRC 100505 / T-27).